A 262-amino-acid polypeptide reads, in one-letter code: Ribosomal RNA small subunit methyltransferase A (262 aa).

S-adenosyl-L-methionine-binding residues include Asn14, Leu16, Gly41, Glu62, Asp87, and Asn109.

It belongs to the class I-like SAM-binding methyltransferase superfamily. rRNA adenine N(6)-methyltransferase family. RsmA subfamily.

It localises to the cytoplasm. The enzyme catalyses adenosine(1518)/adenosine(1519) in 16S rRNA + 4 S-adenosyl-L-methionine = N(6)-dimethyladenosine(1518)/N(6)-dimethyladenosine(1519) in 16S rRNA + 4 S-adenosyl-L-homocysteine + 4 H(+). Its function is as follows. Specifically dimethylates two adjacent adenosines (A1518 and A1519) in the loop of a conserved hairpin near the 3'-end of 16S rRNA in the 30S particle. May play a critical role in biogenesis of 30S subunits. The sequence is that of Ribosomal RNA small subunit methyltransferase A from Francisella tularensis subsp. novicida (strain U112).